The sequence spans 70 residues: Protein SlyX homolog (70 aa).

It belongs to the SlyX family.

The chain is Protein SlyX homolog from Shewanella pealeana (strain ATCC 700345 / ANG-SQ1).